Here is a 149-residue protein sequence, read N- to C-terminus: Calmodulin (149 aa).

EF-hand domains follow at residues 8–43 (QQIA…LGQN), 44–79 (PSES…KMKD), 81–116 (DSEA…IGEK), and 117–149 (LSDA…LAAK). Residues aspartate 21, aspartate 23, aspartate 25, lysine 27, glutamate 32, aspartate 57, asparagine 59, aspartate 61, serine 63, glutamate 68, aspartate 94, asparagine 96, aspartate 98, lysine 100, glutamate 105, aspartate 130, asparagine 132, aspartate 134, glutamate 136, and glutamate 141 each contribute to the Ca(2+) site.

The protein belongs to the calmodulin family.

Functionally, calmodulin mediates the control of a large number of enzymes, ion channels and other proteins by Ca(2+). Among the enzymes to be stimulated by the calmodulin-Ca(2+) complex are a number of protein kinases and phosphatases. The polypeptide is Calmodulin (CMD1) (Candida albicans (Yeast)).